We begin with the raw amino-acid sequence, 172 residues long: Type IV secretion system putative outer membrane lipoprotein BRA0058/BS1330_II0058 (172 aa).

The first 15 residues, 1 to 15, serve as a signal peptide directing secretion; sequence MRTLVMVACAVSLAA. The N-palmitoyl cysteine moiety is linked to residue C16. Residue C16 is the site of S-diacylglycerol cysteine attachment. One can recognise an OmpA-like domain in the interval 58 to 172; sequence WPARPPKQTV…RRVDIEILRK (115 aa).

It localises to the cell outer membrane. Functionally, the VirB system could be required for the establishment of the replication niche in the host. This is Type IV secretion system putative outer membrane lipoprotein BRA0058/BS1330_II0058 from Brucella suis biovar 1 (strain 1330).